Consider the following 287-residue polypeptide: MGQKINPHGFRLGITTDWKSRWYADKQYKDYVKEDVAIRRLLATGLERAGIADVEIERTRDRVRVDIHTARPGIVIGRRGTEADRIRADLEKLTKKQVQLNILEVKNPESVAQLVAQGVAEQLSNRVAFRRAMRKAIQSAMRQPNVKGIRVQCSGRLGGAEMSRSEFYREGRVPLHTLRADIDYGLYEAKTTFGRIGVKVWIYKGDIVGGKRELTAAAPAGADRPRRERPSGSRPRRSGASGTTATSTDAGRAASGTQEAPAAAEAAAGTEAAAGAAAETTTQNPGS.

The KH type-2 domain maps to 38–106 (IRRLLATGLE…QVQLNILEVK (69 aa)). The interval 216–287 (AAAPAGADRP…AETTTQNPGS (72 aa)) is disordered. Residues 238–287 (SGASGTTATSTDAGRAASGTQEAPAAAEAAAGTEAAAGAAAETTTQNPGS) are compositionally biased toward low complexity.

It belongs to the universal ribosomal protein uS3 family. In terms of assembly, part of the 30S ribosomal subunit. Forms a tight complex with proteins S10 and S14.

Functionally, binds the lower part of the 30S subunit head. Binds mRNA in the 70S ribosome, positioning it for translation. The protein is Small ribosomal subunit protein uS3 of Mycobacterium sp. (strain JLS).